The primary structure comprises 126 residues: Nuclear transport factor 2B (126 aa).

An N-acetylserine modification is found at S2. Positions 9-123 constitute an NTF2 domain; it reads VSKAFVEHYY…FYVFNDIFRL (115 aa).

As to quaternary structure, interacts with RAN1. In terms of tissue distribution, expressed in roots, stems, leaves and flowers, and, at low levels, in siliques.

The protein localises to the cytoplasm. It localises to the nucleus. Its subcellular location is the nucleus envelope. Facilitates protein transport into the nucleus. Interacts with various nucleoporins and with Ran-GDP. Could be part of a multicomponent system of cytosolic factors that assemble at the pore complex during nuclear import. In Arabidopsis thaliana (Mouse-ear cress), this protein is Nuclear transport factor 2B.